The primary structure comprises 76 residues: Small ribosomal subunit protein eS17 (76 aa).

It belongs to the eukaryotic ribosomal protein eS17 family.

In Picrophilus torridus (strain ATCC 700027 / DSM 9790 / JCM 10055 / NBRC 100828 / KAW 2/3), this protein is Small ribosomal subunit protein eS17.